The chain runs to 156 residues: Small ribosomal subunit protein uS7 (156 aa).

This sequence belongs to the universal ribosomal protein uS7 family. Part of the 30S ribosomal subunit. Contacts proteins S9 and S11.

Functionally, one of the primary rRNA binding proteins, it binds directly to 16S rRNA where it nucleates assembly of the head domain of the 30S subunit. Is located at the subunit interface close to the decoding center, probably blocks exit of the E-site tRNA. The sequence is that of Small ribosomal subunit protein uS7 from Bradyrhizobium diazoefficiens (strain JCM 10833 / BCRC 13528 / IAM 13628 / NBRC 14792 / USDA 110).